We begin with the raw amino-acid sequence, 173 residues long: Transmembrane protein 278 (173 aa).

The span at 1 to 14 (MSEQERETEEDEGV) shows a compositional bias: acidic residues. A disordered region spans residues 1–25 (MSEQERETEEDEGVASDTAPMLPRR). Helical transmembrane passes span 31–51 (HISV…VLSG), 53–73 (ALVG…LVLL), and 107–127 (AALI…AAAA). The tract at residues 141–165 (DPARTPAPRRPPRSSGDLADGHPDE) is disordered.

Belongs to the TMEM88 family.

The protein localises to the membrane. This is Transmembrane protein 278 (Tmem278) from Mus musculus (Mouse).